We begin with the raw amino-acid sequence, 79 residues long: Cell division protein ZapB (79 aa).

Positions 3–79 (LEVFEKLEAK…QALLGRMEEV (77 aa)) form a coiled coil.

It belongs to the ZapB family. Homodimer. The ends of the coiled-coil dimer bind to each other, forming polymers. Interacts with FtsZ.

It is found in the cytoplasm. In terms of biological role, non-essential, abundant cell division factor that is required for proper Z-ring formation. It is recruited early to the divisome by direct interaction with FtsZ, stimulating Z-ring assembly and thereby promoting cell division earlier in the cell cycle. Its recruitment to the Z-ring requires functional FtsA or ZipA. In Salmonella typhi, this protein is Cell division protein ZapB.